Consider the following 94-residue polypeptide: Co-chaperonin GroES (94 aa).

The protein belongs to the GroES chaperonin family. As to quaternary structure, heptamer of 7 subunits arranged in a ring. Interacts with the chaperonin GroEL.

It is found in the cytoplasm. Functionally, together with the chaperonin GroEL, plays an essential role in assisting protein folding. The GroEL-GroES system forms a nano-cage that allows encapsulation of the non-native substrate proteins and provides a physical environment optimized to promote and accelerate protein folding. GroES binds to the apical surface of the GroEL ring, thereby capping the opening of the GroEL channel. The polypeptide is Co-chaperonin GroES (Clostridium novyi (strain NT)).